A 353-amino-acid chain; its full sequence is Small ribosomal subunit biogenesis GTPase RsgA (353 aa).

Residues 1–17 show a composition bias toward polar residues; sequence MSKNKLSKGQQRRVNAN. The tract at residues 1-25 is disordered; sequence MSKNKLSKGQQRRVNANHQRRLKTT. Positions 104-274 constitute a CP-type G domain; sequence ASVLTRPDFY…VIDSPGVREF (171 aa). GTP contacts are provided by residues 160-163 and 214-222; these read NKID and GQSGVGKSS. Cys-298, Cys-303, His-305, and Cys-311 together coordinate Zn(2+).

Belongs to the TRAFAC class YlqF/YawG GTPase family. RsgA subfamily. As to quaternary structure, monomer. Associates with 30S ribosomal subunit, binds 16S rRNA. The cofactor is Zn(2+).

It is found in the cytoplasm. In terms of biological role, one of several proteins that assist in the late maturation steps of the functional core of the 30S ribosomal subunit. Helps release RbfA from mature subunits. May play a role in the assembly of ribosomal proteins into the subunit. Circularly permuted GTPase that catalyzes slow GTP hydrolysis, GTPase activity is stimulated by the 30S ribosomal subunit. The sequence is that of Small ribosomal subunit biogenesis GTPase RsgA from Klebsiella pneumoniae (strain 342).